A 99-amino-acid chain; its full sequence is Co-chaperonin GroES (99 aa).

This sequence belongs to the GroES chaperonin family. As to quaternary structure, heptamer of 7 subunits arranged in a ring. Interacts with the chaperonin GroEL.

Its subcellular location is the cytoplasm. In terms of biological role, together with the chaperonin GroEL, plays an essential role in assisting protein folding. The GroEL-GroES system forms a nano-cage that allows encapsulation of the non-native substrate proteins and provides a physical environment optimized to promote and accelerate protein folding. GroES binds to the apical surface of the GroEL ring, thereby capping the opening of the GroEL channel. The sequence is that of Co-chaperonin GroES from Corynebacterium kroppenstedtii (strain DSM 44385 / JCM 11950 / CIP 105744 / CCUG 35717).